Here is a 166-residue protein sequence, read N- to C-terminus: Spiderine-1a (166 aa).

Residues 1-18 (MKFALVLLGVCAFYLVNA) form the signal peptide. The propeptide occupies 19–58 (TGDLETELEASELQELQEALDLIGETPLESLEAEELEEAR). The segment at 59–99 (KFKWGKLFSTAKKLYKKGKKLSKNKNFKKALKFGKQLAKNL) is linear cationic cytotoxin domain. One can recognise an Oxytoxin-type inhibitor cystine knot (ICK) domain in the interval 113–166 (NNKCWAIGTTCSDDCDCCPEHHCHCPAGKWLPGLFRCTCQVTESDKVNKCPPAE). Intrachain disulfides connect C116-C130, C123-C135, C127-C162, C129-C151, and C137-C149.

Belongs to the spiderine family. Cationic/spiderine subfamily. Expressed by the venom gland.

It is found in the secreted. Has antimicrobial, insecticidal, cytolytic and cytotoxic activity. Active against E.coli DH5alpha, E.faecalis VKM B 871, B.subtilis VKM B 501, A.globiformis VKM Ac 1112, P.aeruginosa PAO1 and S.aureus 209P in submicromolar or low micromolar ranges. Lyses human erythrocytes. Kills HeLA and A549 cells. This is Spiderine-1a from Oxyopes takobius (Lynx spider).